Here is a 360-residue protein sequence, read N- to C-terminus: Cyclin-D1-binding protein 1 (360 aa).

At Ala2 the chain carries N-acetylalanine. 2 interaction with TCF3 regions span residues 2 to 184 (ASAT…VDFV) and 150 to 360 (ISYN…ELEL). Interaction with RPLP0 stretches follow at residues 2-190 (ASAT…AHEE) and 240-360 (LIIP…ELEL). Residues 2 to 208 (ASATAPAAAV…DPYSGLLNDT (207 aa)) are required for interaction with CCND1.

It belongs to the CCNDBP1 family. In terms of assembly, interacts with CCND1 and GRAP2. May also interact with COPS5, RPLP0, SIRT6, SYF2 and TCF3. Phosphorylated. In terms of tissue distribution, ubiquitously expressed. Expression is down-regulated in a variety of tumor types including breast, colon, prostate and rectal tumors, and is up-regulated in certain hepatic carcinomas.

The protein resides in the cytoplasm. It is found in the nucleus. Functionally, may negatively regulate cell cycle progression. May act at least in part via inhibition of the cyclin-D1/CDK4 complex, thereby preventing phosphorylation of RB1 and blocking E2F-dependent transcription. In Homo sapiens (Human), this protein is Cyclin-D1-binding protein 1 (CCNDBP1).